A 475-amino-acid chain; its full sequence is Flavin-dependent monooxygenase (475 aa).

It belongs to the aromatic-ring hydroxylase family. FAD is required as a cofactor.

The protein localises to the cytoplasm. It carries out the reaction a tetracycline + NADPH + O2 + H(+) = an 11a-hydroxytetracycline + NADP(+) + H2O. The enzyme catalyses tetracycline + NADPH + O2 + H(+) = 11a-hydroxytetracycline + NADP(+) + H2O. With respect to regulation, inhibited by anhydrotetracycline. In terms of biological role, an FAD-requiring monooxygenase active on some tetracycline antibiotic derivatives, which leads to their inactivation. Hydroxylates carbon 11a of tetracycline and some analogs. Confers resistance to tetracycline and doxycycline via an oxidoreductase activity; probably monooxygenates the antibiotics. Does not act on tigecycline. This chain is Flavin-dependent monooxygenase, found in Mycobacteroides abscessus (strain ATCC 19977 / DSM 44196 / CCUG 20993 / CIP 104536 / JCM 13569 / NCTC 13031 / TMC 1543 / L948) (Mycobacterium abscessus).